A 71-amino-acid polypeptide reads, in one-letter code: Small, acid-soluble spore protein I (71 aa).

The protein belongs to the SspI family.

The protein resides in the spore core. The protein is Small, acid-soluble spore protein I of Bacillus velezensis (strain DSM 23117 / BGSC 10A6 / LMG 26770 / FZB42) (Bacillus amyloliquefaciens subsp. plantarum).